Consider the following 583-residue polypeptide: Alpha-1,3-arabinosyltransferase XAT2 (583 aa).

Residues 1 to 21 lie on the Cytoplasmic side of the membrane; that stretch reads MKPVERAKLVRSLRQESRRLR. A helical; Signal-anchor for type II membrane protein membrane pass occupies residues 22-42; sequence LLVLVIGFFLVTLTFVVISKP. The Lumenal segment spans residues 43–583; sequence DALLFNLNGR…LLEVLDQLNQ (541 aa). The tract at residues 73–178 is disordered; it reads RRSADTFPAA…NGKQEDGKPN (106 aa). Basic and acidic residues-rich tracts occupy residues 102-121 and 135-146; these read TSEEEKRLLSSEPEQGKNEE and EDNKNGEEEGHT. Positions 149 to 160 are enriched in polar residues; sequence SKVTLPTVSNYT. An N-linked (GlcNAc...) asparagine glycan is attached at Asn158. Residues 162 to 178 are compositionally biased toward basic and acidic residues; the sequence is RDAEDTDNGKQEDGKPN. Asn229, Asn382, Asn450, and Asn485 each carry an N-linked (GlcNAc...) asparagine glycan.

The protein belongs to the glycosyltransferase 61 family.

The protein localises to the golgi apparatus membrane. It participates in glycan metabolism. In terms of biological role, glycosyltransferase involved in the arabinosylation of xylan, the major hemicellulose (non-cellulosic component) of primary and secondary walls of angiosperms. Possesses alpha-1,3-arabinosyltransferase activity, transferring an arabinofuranose residue to the xylan backbone. This Oryza sativa subsp. japonica (Rice) protein is Alpha-1,3-arabinosyltransferase XAT2.